A 145-amino-acid chain; its full sequence is Large ribosomal subunit protein bL17 (145 aa).

This sequence belongs to the bacterial ribosomal protein bL17 family. As to quaternary structure, part of the 50S ribosomal subunit. Contacts protein L32.

The sequence is that of Large ribosomal subunit protein bL17 from Orientia tsutsugamushi (strain Ikeda) (Rickettsia tsutsugamushi).